The sequence spans 214 residues: Large ribosomal subunit protein uL16-like (214 aa).

It belongs to the universal ribosomal protein uL16 family. In terms of assembly, component of a male germ cell-specific 60S large ribosomal subunit (LSU), which contains RPL10L and RPL39L, instead of RPL10 and RPL39 paralogs. The composition of the rest of the complex is similar to classical ribosomes. Testis-specific.

It localises to the cytoplasm. Functionally, testis-specific component of the ribosome, which is required for the transition from prophase to metaphase in male meiosis I. Compensates for the inactivated X-linked RPL10 paralog during spermatogenesis. The ribosome is a large ribonucleoprotein complex responsible for the synthesis of proteins in the cell. The male germ cell-specific ribosome displays a ribosomal polypeptide exit tunnel of distinct size and charge states compared with the classical ribosome. It is responsible for regulating the biosynthesis and folding of a subset of male germ-cell-specific proteins that are essential for the formation of sperm. This chain is Large ribosomal subunit protein uL16-like, found in Mus musculus (Mouse).